We begin with the raw amino-acid sequence, 2004 residues long: Immunoglobulin A1 protease (2004 aa).

The first 42 residues, 1–42 (MEKYFGEKQERFSFRKLSVGLVSATISSLFFMSVLASSSVDA), serve as a signal peptide directing secretion. The propeptide occupies 43 to 99 (QETAGVHYKYVADSELSSEEKKQLVYDIPTYVENDDETYYLVYKLNSQNQLAELPNT). An LPXTG sorting signal motif is present at residues 96–100 (LPNTG). T99 is modified (pentaglycyl murein peptidoglycan amidated threonine). Helical transmembrane passes span 106–125 (QALVAGASLAAMGILIFAVS) and 132–154 (KTVLHLVLVAGIGNGVLVSVHAL). Residues 155 to 2004 (ENHLLLNYNT…FRSSIFENKK (1850 aa)) lie on the Extracellular side of the membrane. Disordered stretches follow at residues 194–213 (TTSESEVSNQKSSVATPTKQ), 235–305 (QEQT…NPQD), 373–394 (EIVSTSTTAPSPRIVEKGTKKT), and 422–720 (PELP…PEKT). Composition is skewed to polar residues over residues 197–213 (ESEVSNQKSSVATPTKQ) and 235–246 (QEQTPVSSTKPT). Over residues 276–296 (LAEHKNLETKKEEKISPKEKT) the composition is skewed to basic and acidic residues. The G5 domain maps to 314–393 (KPELLYREET…PRIVEKGTKK (80 aa)). 3 consecutive repeat copies span residues 419 to 435 (AIQPELPEAVVSDKGEP), 436 to 452 (EVQPTLPEAVVTDKGET), and 453 to 469 (EVQPESPDTVVSDKGEP). The segment at 419 to 469 (AIQPELPEAVVSDKGEPEVQPTLPEAVVTDKGETEVQPESPDTVVSDKGEP) is 3 X 17 AA approximate tandem repeats. The segment covering 485–511 (VKPETPVEKTKEQGPEKTEEVPVKPTE) has biased composition (basic and acidic residues). Composition is skewed to polar residues over residues 516–529 (NPNEGTTEGTSIQE) and 538–572 (EESTTNSEKVSPDTSSKNTGEVSSNPSDSTTSVGE). Positions 574–591 (NKPEHNDSKNENSEKTVE) are enriched in basic and acidic residues. Polar residues-rich tracts occupy residues 618 to 639 (EETQTNSGKIANENTGEVSNKP) and 648 to 681 (ESNQPEKNGTATKPENSGNTTSENGQTEPEPSNG). Residues 682–699 (NSTEDVSTESNTSNSNGN) are compositionally biased toward low complexity. Residues 700–720 (EEIKQENELDPDKKVEEPEKT) show a composition bias toward basic and acidic residues. H1645 lines the Zn(2+) pocket. E1646 is a catalytic residue. Zn(2+) is bound by residues H1649 and E1669.

Belongs to the peptidase M26 family. Zn(2+) is required as a cofactor. Post-translationally, the Gram-positive cell-wall anchor motif LPXTG is located in the N-terminal part, in contrast to such motifs in other known streptococcal and staphylococcal proteins. The protease could be cleaved by the sortase and anchored in the membrane via the two potential N-terminal transmembrane domains, whereas the propeptide located prior to the LPXTG motif would remain attached to the cell wall peptidoglycan by an amide bond.

The protein localises to the secreted. It is found in the cell wall. The protein resides in the membrane. The catalysed reaction is Cleavage of Pro-|-Thr bond in the hinge region of the heavy chain of human IgA.. Its function is as follows. Zinc metalloproteinase which cleaves human immunoglobulin A1 (IgA1) in the hinge region, rendering it less efficient in coating the surface of colonizing or invading pneumococci. Strongly contributes to virulence in mice. May be responsible for pneumococcal infection and is potentially involved in distinct stages of pneumococcal disease. The protein is Immunoglobulin A1 protease (iga) of Streptococcus pneumoniae serotype 4 (strain ATCC BAA-334 / TIGR4).